Consider the following 168-residue polypeptide: Cilia- and flagella-associated protein 276 (168 aa).

2 disordered regions span residues 35–61 and 149–168; these read AHLA…RDTF and HTAA…FFST. Positions 38 to 55 are enriched in polar residues; it reads AQQQDPWSRLSSTPTATS.

As to quaternary structure, microtubule inner protein component of sperm flagellar doublet microtubules. Predominantly expressed in nervous system tissues, such as the spinal cord, cerebrum, cerebellum, and sciatic nerve.

Its subcellular location is the cytoplasm. It is found in the cytoskeleton. The protein resides in the cilium axoneme. The protein localises to the flagellum axoneme. Microtubule inner protein (MIP) part of the dynein-decorated doublet microtubules (DMTs) in cilia axoneme, which is required for motile cilia beating. May play an important role for the maintenance of myelin-axon integrity. May affect intracellular Ca(2+) homeostasis. The chain is Cilia- and flagella-associated protein 276 from Mus musculus (Mouse).